The following is a 413-amino-acid chain: PCI domain-containing protein 2 homolog (413 aa).

The region spanning 222–403 (VAYNYFLGRK…QKLVISKTNA (182 aa)) is the PCI domain.

It belongs to the CSN12 family.

The sequence is that of PCI domain-containing protein 2 homolog from Caenorhabditis briggsae.